Consider the following 416-residue polypeptide: D-amino acid dehydrogenase 2 (416 aa).

Position 5–19 (Val-5–Tyr-19) interacts with FAD.

The protein belongs to the DadA oxidoreductase family. FAD is required as a cofactor.

The enzyme catalyses a D-alpha-amino acid + A + H2O = a 2-oxocarboxylate + AH2 + NH4(+). Functionally, oxidative deamination of D-amino acids. The sequence is that of D-amino acid dehydrogenase 2 (dadA2) from Pseudomonas aeruginosa (strain ATCC 15692 / DSM 22644 / CIP 104116 / JCM 14847 / LMG 12228 / 1C / PRS 101 / PAO1).